The following is a 152-amino-acid chain: MRCPFCGNGDTQVKDSRPTEDSAAIRRRRFCPACNSRFTTFERVQLRDLVIVKKDGQRSAFDRDKLARSIRIACRKRPVDEDSIERIVNGIQRRLESSGDTEINSKAVGELVMEGLRGLDPVAYVRFASVYRNFREAKDFEDFVETLGGSAD.

Residues 1-21 (MRCPFCGNGDTQVKDSRPTED) are disordered. The segment at 3–34 (CPFCGNGDTQVKDSRPTEDSAAIRRRRFCPAC) is a zinc-finger region. Over residues 12 to 21 (QVKDSRPTED) the composition is skewed to basic and acidic residues. The ATP-cone domain maps to 49-139 (LVIVKKDGQR…VYRNFREAKD (91 aa)).

Belongs to the NrdR family. Requires Zn(2+) as cofactor.

Its function is as follows. Negatively regulates transcription of bacterial ribonucleotide reductase nrd genes and operons by binding to NrdR-boxes. In Rhodospirillum rubrum (strain ATCC 11170 / ATH 1.1.1 / DSM 467 / LMG 4362 / NCIMB 8255 / S1), this protein is Transcriptional repressor NrdR.